Reading from the N-terminus, the 206-residue chain is Protein SUE1, mitochondrial (206 aa).

A mitochondrion-targeting transit peptide spans 1-24 (MILLKRTKIRGVSVSFVSLQRRTH).

It is found in the mitochondrion envelope. Its function is as follows. Required for degradation of unstable forms of cytochrome c. This chain is Protein SUE1, mitochondrial, found in Saccharomyces cerevisiae (strain ATCC 204508 / S288c) (Baker's yeast).